Consider the following 491-residue polypeptide: E3 ubiquitin-protein ligase Hakai (491 aa).

2 disordered regions span residues 1–20 (MDHT…LGGL) and 33–61 (KQAS…GDEE). The RING-type zinc finger occupies 109 to 149 (CDKCGLPIKVYGRMIPCKHVFCYDCAILHEKKGDKMCPGCS). An HYB domain region spans residues 148–206 (CSDPVQRIEQCTRGSLFMCSIVQGCKRTYLSQRDLQAHINHRHMRAGKPVTRASLENVH). A C2H2-type zinc finger spans residues 164–190 (FMCSIVQGCKRTYLSQRDLQAHINHRH). A phosphoserine mark is found at serine 201, serine 285, and serine 290. The segment at 255-491 (QPHEDIRAPP…DQTRYRPYYQ (237 aa)) is disordered. 3 stretches are compositionally biased toward pro residues: residues 342 to 359 (APPP…PHPP), 372 to 389 (APPP…PPPG), and 399 to 423 (MNHP…PPHH). The segment covering 427–442 (NSLPQFTEDQGTLSPP) has biased composition (polar residues). Positions 457 to 478 (PRGPPPPPRMQGPPSQTPLPGP) are enriched in pro residues.

It belongs to the Hakai family. As to quaternary structure, homodimer. Interacts with tyrosine-phosphorylated SRC substrates. Component of the WMM complex, a N6-methyltransferase complex composed of a catalytic subcomplex, named MAC, and of an associated subcomplex, named MACOM. The MAC subcomplex is composed of METTL3 and METTL14. The MACOM subcomplex is composed of WTAP, ZC3H13, CBLL1/HAKAI, VIRMA, and, in some cases of RBM15 (RBM15 or RBM15B). Also a component of a MACOM-like complex, named WTAP complex, composed of WTAP, ZC3H13, CBLL1, VIRMA, RBM15, BCLAF1 and THRAP3. Phosphorylated on tyrosine residues. In terms of tissue distribution, detected in heart, brain, spleen, lung, liver, skeletal muscle, kidney and testis.

It is found in the nucleus speckle. It localises to the nucleus. The protein localises to the nucleoplasm. Its subcellular location is the cytoplasm. The catalysed reaction is S-ubiquitinyl-[E2 ubiquitin-conjugating enzyme]-L-cysteine + [acceptor protein]-L-lysine = [E2 ubiquitin-conjugating enzyme]-L-cysteine + N(6)-ubiquitinyl-[acceptor protein]-L-lysine.. It participates in protein modification; protein ubiquitination. E3 ubiquitin-protein ligase that mediates ubiquitination of several tyrosine-phosphorylated Src substrates, including CDH1, CTTN and DOK1. Targets CDH1 for endocytosis and degradation. Associated component of the WMM complex, a complex that mediates N6-methyladenosine (m6A) methylation of RNAs, a modification that plays a role in the efficiency of mRNA splicing and RNA processing. Its function in the WMM complex is unknown. In Mus musculus (Mouse), this protein is E3 ubiquitin-protein ligase Hakai.